A 469-amino-acid polypeptide reads, in one-letter code: Glutamate--tRNA ligase (469 aa).

Positions 11–21 (PSPTGFIHLGN) match the 'HIGH' region motif. The 'KMSKS' region motif lies at 243-247 (KMSKR). Residue Lys246 participates in ATP binding.

Belongs to the class-I aminoacyl-tRNA synthetase family. Glutamate--tRNA ligase type 1 subfamily. Monomer.

Its subcellular location is the cytoplasm. The catalysed reaction is tRNA(Glu) + L-glutamate + ATP = L-glutamyl-tRNA(Glu) + AMP + diphosphate. In terms of biological role, catalyzes the attachment of glutamate to tRNA(Glu) in a two-step reaction: glutamate is first activated by ATP to form Glu-AMP and then transferred to the acceptor end of tRNA(Glu). The chain is Glutamate--tRNA ligase from Burkholderia cenocepacia (strain ATCC BAA-245 / DSM 16553 / LMG 16656 / NCTC 13227 / J2315 / CF5610) (Burkholderia cepacia (strain J2315)).